Reading from the N-terminus, the 164-residue chain is Putative 4-hydroxy-4-methyl-2-oxoglutarate aldolase (164 aa).

Substrate-binding positions include 80–83 and Arg-102; that span reads GGNL. Asp-103 contributes to the a divalent metal cation binding site.

It belongs to the class II aldolase/RraA-like family. In terms of assembly, homotrimer. It depends on a divalent metal cation as a cofactor.

The catalysed reaction is 4-hydroxy-4-methyl-2-oxoglutarate = 2 pyruvate. It carries out the reaction oxaloacetate + H(+) = pyruvate + CO2. In terms of biological role, catalyzes the aldol cleavage of 4-hydroxy-4-methyl-2-oxoglutarate (HMG) into 2 molecules of pyruvate. Also contains a secondary oxaloacetate (OAA) decarboxylase activity due to the common pyruvate enolate transition state formed following C-C bond cleavage in the retro-aldol and decarboxylation reactions. In Burkholderia multivorans (strain ATCC 17616 / 249), this protein is Putative 4-hydroxy-4-methyl-2-oxoglutarate aldolase.